We begin with the raw amino-acid sequence, 166 residues long: 2-C-methyl-D-erythritol 2,4-cyclodiphosphate synthase (166 aa).

A divalent metal cation-binding residues include aspartate 17 and histidine 19. 4-CDP-2-C-methyl-D-erythritol 2-phosphate is bound by residues 17–19 (DSH) and 43–44 (HS). Histidine 51 contributes to the a divalent metal cation binding site. 4-CDP-2-C-methyl-D-erythritol 2-phosphate-binding positions include 65–67 (DIG), 109–115 (AQKPKMA), and arginine 151.

Belongs to the IspF family. In terms of assembly, homotrimer. A divalent metal cation is required as a cofactor.

It carries out the reaction 4-CDP-2-C-methyl-D-erythritol 2-phosphate = 2-C-methyl-D-erythritol 2,4-cyclic diphosphate + CMP. The protein operates within isoprenoid biosynthesis; isopentenyl diphosphate biosynthesis via DXP pathway; isopentenyl diphosphate from 1-deoxy-D-xylulose 5-phosphate: step 4/6. Involved in the biosynthesis of isopentenyl diphosphate (IPP) and dimethylallyl diphosphate (DMAPP), two major building blocks of isoprenoid compounds. Catalyzes the conversion of 4-diphosphocytidyl-2-C-methyl-D-erythritol 2-phosphate (CDP-ME2P) to 2-C-methyl-D-erythritol 2,4-cyclodiphosphate (ME-CPP) with a corresponding release of cytidine 5-monophosphate (CMP). This is 2-C-methyl-D-erythritol 2,4-cyclodiphosphate synthase from Rhodopirellula baltica (strain DSM 10527 / NCIMB 13988 / SH1).